Consider the following 133-residue polypeptide: MSTEDLYQDDVEMLDDYEEPVPEQADQQQRDDEYAEHAFGYADSDAEHEEQSGDHHESPMLDSLELDLTLRCGDLRLTLAELRRLDAGSILEVSGIAPGHATLCHGEQVVAEGELVDVEGRLGLQITRLVARS.

Positions 1–21 (MSTEDLYQDDVEMLDDYEEPV) are enriched in acidic residues. A disordered region spans residues 1–60 (MSTEDLYQDDVEMLDDYEEPVPEQADQQQRDDEYAEHAFGYADSDAEHEEQSGDHHESPM). Basic and acidic residues predominate over residues 49–59 (EEQSGDHHESP).

Belongs to the FliN/MopA/SpaO family. In terms of assembly, homotetramer. The four monomers assemble into two tightly bound homodimers. Interacts with HrcQa.

It localises to the cytoplasm. In terms of biological role, component of the type III secretion system, which is required for effector protein delivery, parasitism, and pathogenicity. Probably participates in the formation of a C-ring-like assembly along with HrcQa. This Pseudomonas syringae pv. syringae protein is Type III secretion protein HrcQb (hrcQb).